The primary structure comprises 314 residues: Porphobilinogen deaminase (314 aa).

Position 242 is an S-(dipyrrolylmethanemethyl)cysteine (Cys242).

The protein belongs to the HMBS family. In terms of assembly, monomer. Requires dipyrromethane as cofactor.

The catalysed reaction is 4 porphobilinogen + H2O = hydroxymethylbilane + 4 NH4(+). The protein operates within porphyrin-containing compound metabolism; protoporphyrin-IX biosynthesis; coproporphyrinogen-III from 5-aminolevulinate: step 2/4. Functionally, tetrapolymerization of the monopyrrole PBG into the hydroxymethylbilane pre-uroporphyrinogen in several discrete steps. This Bacillus subtilis (strain 168) protein is Porphobilinogen deaminase (hemC).